We begin with the raw amino-acid sequence, 528 residues long: Na(+)/H(+) antiporter NhaB (528 aa).

10 helical membrane passes run 11-31 (VNFL…FLVI), 67-87 (PGGL…SQVL), 98-118 (LLLI…LFVF), 140-160 (AFLS…AVGI), 240-260 (FFIR…LTCV), 311-331 (LVAG…SVII), 350-370 (EEAL…GVII), 391-411 (LVVF…VFVG), 449-469 (ATPN…APLI), and 476-496 (MVIM…VTIE).

This sequence belongs to the NhaB Na(+)/H(+) (TC 2.A.34) antiporter family.

It localises to the cell inner membrane. It carries out the reaction 2 Na(+)(in) + 3 H(+)(out) = 2 Na(+)(out) + 3 H(+)(in). Its function is as follows. Na(+)/H(+) antiporter that extrudes sodium in exchange for external protons. The polypeptide is Na(+)/H(+) antiporter NhaB (Shewanella denitrificans (strain OS217 / ATCC BAA-1090 / DSM 15013)).